Here is a 166-residue protein sequence, read N- to C-terminus: Disulfide bond reductase DsbH (166 aa).

The N-terminal stretch at 1 to 22 (MKFWLQGCAFVGCLLLTLPCCA) is a signal peptide. The region spanning 32-166 (LQQTRPIAAA…SKVKSALKLR (135 aa)) is the Thioredoxin domain. Cysteine 72 and cysteine 75 are disulfide-bonded. 73–74 (MW) contributes to the substrate binding site.

As to quaternary structure, monomer.

The protein resides in the periplasm. Its function is as follows. Catalyzes the reduction of disulfide bonds. May function in reducing intermolecular disulfides between proteins and small molecules in the periplasm, or keeping a specific subset of periplasmic proteins reduced, or maintaining the periplasm of Chlamydia in a generally reducing state. Seems to be unable to oxidize thiols into disulfides and does not display disulfide bond isomerase activity. The sequence is that of Disulfide bond reductase DsbH (dsbH) from Chlamydia pneumoniae (Chlamydophila pneumoniae).